We begin with the raw amino-acid sequence, 666 residues long: L-aspartate N-monooxygenase (nitrosuccinate-forming) (666 aa).

Positions 645 to 666 (LPAYEDPGVRCPSDDRLTEVTA) are disordered. Over residues 656-666 (PSDDRLTEVTA) the composition is skewed to basic and acidic residues.

The protein belongs to the nitrosuccinic acid synthase family. FAD serves as cofactor.

The enzyme catalyses L-aspartate + 3 NADPH + 3 O2 + 2 H(+) = 2-nitrobutanedioate + 3 NADP(+) + 4 H2O. It functions in the pathway antibiotic biosynthesis. Functionally, part of a gene cluster involved in the biosynthesis of cremeomycin, a light-sensitive o-diazoquinone with antibacterial and antiproliferative effects. Catalyzes the iterative oxidation of L-aspartic acid to nitrosuccinic acid (2-nitrobutanedioate) via N-hydroxyaspartic acid and nitrososuccinic acid. The protein is L-aspartate N-monooxygenase (nitrosuccinate-forming) of Streptomyces cremeus.